The following is a 449-amino-acid chain: Glutamyl-tRNA reductase (449 aa).

Substrate contacts are provided by residues 58-61, Ser121, 126-128, and Gln132; these read TCNR and ETQ. Catalysis depends on Cys59, which acts as the Nucleophile. 203-208 lines the NADP(+) pocket; it reads GLGEMA.

Belongs to the glutamyl-tRNA reductase family. As to quaternary structure, homodimer.

It carries out the reaction (S)-4-amino-5-oxopentanoate + tRNA(Glu) + NADP(+) = L-glutamyl-tRNA(Glu) + NADPH + H(+). It participates in porphyrin-containing compound metabolism; protoporphyrin-IX biosynthesis; 5-aminolevulinate from L-glutamyl-tRNA(Glu): step 1/2. Functionally, catalyzes the NADPH-dependent reduction of glutamyl-tRNA(Glu) to glutamate 1-semialdehyde (GSA). The polypeptide is Glutamyl-tRNA reductase (Helicobacter pylori (strain ATCC 700392 / 26695) (Campylobacter pylori)).